Consider the following 398-residue polypeptide: S-adenosylmethionine synthase (398 aa).

His-16 provides a ligand contact to ATP. Mg(2+) is bound at residue Asp-18. Glu-51 contacts K(+). 2 residues coordinate L-methionine: Glu-64 and Gln-108. The interval 108–118 is flexible loop; it reads QSADIAQGVDA. ATP is bound by residues 176–178, 242–243, Asp-251, 257–258, Ala-274, and Lys-278; these read DSK, KF, and RK. Residue Asp-251 participates in L-methionine binding. Lys-282 contacts L-methionine.

The protein belongs to the AdoMet synthase family. As to quaternary structure, homotetramer; dimer of dimers. The cofactor is Mg(2+). Requires K(+) as cofactor.

It is found in the cytoplasm. It catalyses the reaction L-methionine + ATP + H2O = S-adenosyl-L-methionine + phosphate + diphosphate. The protein operates within amino-acid biosynthesis; S-adenosyl-L-methionine biosynthesis; S-adenosyl-L-methionine from L-methionine: step 1/1. Catalyzes the formation of S-adenosylmethionine (AdoMet) from methionine and ATP. The overall synthetic reaction is composed of two sequential steps, AdoMet formation and the subsequent tripolyphosphate hydrolysis which occurs prior to release of AdoMet from the enzyme. This Bradyrhizobium diazoefficiens (strain JCM 10833 / BCRC 13528 / IAM 13628 / NBRC 14792 / USDA 110) protein is S-adenosylmethionine synthase.